Consider the following 193-residue polypeptide: 7-methyl-GTP pyrophosphatase (193 aa).

The active-site Proton acceptor is Asp-70.

Belongs to the Maf family. YceF subfamily. A divalent metal cation serves as cofactor.

Its subcellular location is the cytoplasm. It catalyses the reaction N(7)-methyl-GTP + H2O = N(7)-methyl-GMP + diphosphate + H(+). In terms of biological role, nucleoside triphosphate pyrophosphatase that hydrolyzes 7-methyl-GTP (m(7)GTP). May have a dual role in cell division arrest and in preventing the incorporation of modified nucleotides into cellular nucleic acids. In Photobacterium profundum (strain SS9), this protein is 7-methyl-GTP pyrophosphatase.